A 426-amino-acid polypeptide reads, in one-letter code: Actin-like protein 6B (426 aa).

Positions 39–82 are essential for mediating its function in dendritic development; may contribute to neuronal-specific targeting; it reads TTVGLLAAEEGGGLELEGDKEKKGKIFHIDTNALHVPRDGAEVM.

The protein belongs to the actin family. In terms of assembly, component of the multiprotein chromatin-remodeling complexes SWI/SNF: SWI/SNF-A (BAF), SWI/SNF-B (PBAF) and related complexes. The canonical complex contains a catalytic subunit (either SMARCA4/BRG1/BAF190A or SMARCA2/BRM/BAF190B) and at least SMARCE1, ACTL6A/BAF53, SMARCC1/BAF155, SMARCC2/BAF170 and SMARCB1/SNF5/BAF47. Other subunits specific to each of the complexes may also be present permitting several possible combinations developmentally and tissue specific. Component of the BAF complex, which includes at least actin (ACTB), ARID1A/BAF250A, ARID1B/BAF250B, SMARCA2/BRM, SMARCA4/BRG1/BAF190A, ACTL6A/BAF53, ACTL6B/BAF53B, SMARCE1/BAF57, SMARCC1/BAF155, SMARCC2/BAF170, SMARCB1/SNF5/INI1 and one or more SMARCD1/BAF60A, SMARCD2/BAF60B, or SMARCD3/BAF60C. Component of neuron-specific chromatin remodeling complex (nBAF complex) composed of at least, ARID1A/BAF250A or ARID1B/BAF250B, SMARCD1/BAF60A or SMARCD2/BAF60B or SMARCD3/BAF60C, SMARCA2/BRM/BAF190B, SMARCA4/BRG1/BAF190A, SMARCB1/BAF47, SMARCC1/BAF155, SMARCE1/BAF57, SMARCC2/BAF170, DPF1/BAF45B, DPF3/BAF45C, ACTL6B/BAF53B and actin (ACTB). Note that the nBAF complex is polymorphic in regard to the ATPase, SMARCA2 and SMARCA4 occupying mutually exclusive positions. May be a component of the SWI/SNF-B (PBAF) chromatin remodeling complex, at least composed of SMARCA4/BRG1, SMARCB1/BAF47/SNF5, ACTL6A/BAF53A or ACTL6B/BAF53B, SMARCE1/BAF57, SMARCD1/BAF60A, SMARCD2/BAF60B, perhaps SMARCD3/BAF60C, SMARCC1/BAF155, SMARCC2/BAF170, PBRM1/BAF180, ARID2/BAF200 and actin.

It localises to the nucleus. Involved in transcriptional activation and repression of select genes by chromatin remodeling (alteration of DNA-nucleosome topology). Component of SWI/SNF chromatin remodeling complexes that carry out key enzymatic activities, changing chromatin structure by altering DNA-histone contacts within a nucleosome in an ATP-dependent manner. Belongs to the neuron-specific chromatin remodeling complex (nBAF complex), as such plays a role in remodeling mononucleosomes in an ATP-dependent fashion, and is required for postmitotic neural development and dendritic outgrowth. During neural development a switch from a stem/progenitor to a postmitotic chromatin remodeling mechanism occurs as neurons exit the cell cycle and become committed to their adult state. The transition from proliferating neural stem/progenitor cells to postmitotic neurons requires a switch in subunit composition of the npBAF and nBAF complexes. As neural progenitors exit mitosis and differentiate into neurons, npBAF complexes which contain ACTL6A/BAF53A and PHF10/BAF45A, are exchanged for homologous alternative ACTL6B/BAF53B and DPF1/BAF45B or DPF3/BAF45C subunits in neuron-specific complexes (nBAF). The npBAF complex is essential for the self-renewal/proliferative capacity of the multipotent neural stem cells. The nBAF complex along with CREST plays a role regulating the activity of genes essential for dendrite growth. ACTL6B/BAF53B is not essential for assembly of the nBAF complex but is required for targeting the complex and CREST to the promoter of genes essential for dendritic growth. Essential for neuronal maturation and dendrite development. The sequence is that of Actin-like protein 6B from Homo sapiens (Human).